Consider the following 210-residue polypeptide: Large ribosomal subunit protein uL4 (210 aa).

The span at 41-52 (QTNARQGTASTK) shows a compositional bias: polar residues. The interval 41-71 (QTNARQGTASTKTRAEVRGGGRKPWRQKGTG) is disordered. Positions 60–71 (GGRKPWRQKGTG) are enriched in basic residues.

This sequence belongs to the universal ribosomal protein uL4 family. In terms of assembly, part of the 50S ribosomal subunit.

In terms of biological role, one of the primary rRNA binding proteins, this protein initially binds near the 5'-end of the 23S rRNA. It is important during the early stages of 50S assembly. It makes multiple contacts with different domains of the 23S rRNA in the assembled 50S subunit and ribosome. Functionally, forms part of the polypeptide exit tunnel. The chain is Large ribosomal subunit protein uL4 from Trichormus variabilis (strain ATCC 29413 / PCC 7937) (Anabaena variabilis).